The chain runs to 283 residues: Light-independent protochlorophyllide reductase iron-sulfur ATP-binding protein (283 aa).

Residues 15-20 and K44 each bind ATP; that span reads GIGKST. S19 serves as a coordination point for Mg(2+). [4Fe-4S] cluster-binding residues include C100 and C134. 185–186 is an ATP binding site; it reads NR.

Belongs to the NifH/BchL/ChlL family. Homodimer. Protochlorophyllide reductase is composed of three subunits; ChlL, ChlN and ChlB. It depends on [4Fe-4S] cluster as a cofactor.

It catalyses the reaction chlorophyllide a + oxidized 2[4Fe-4S]-[ferredoxin] + 2 ADP + 2 phosphate = protochlorophyllide a + reduced 2[4Fe-4S]-[ferredoxin] + 2 ATP + 2 H2O. Its pathway is porphyrin-containing compound metabolism; chlorophyll biosynthesis (light-independent). Component of the dark-operative protochlorophyllide reductase (DPOR) that uses Mg-ATP and reduced ferredoxin to reduce ring D of protochlorophyllide (Pchlide) to form chlorophyllide a (Chlide). This reaction is light-independent. The L component serves as a unique electron donor to the NB-component of the complex, and binds Mg-ATP. This Synechococcus sp. (strain JA-2-3B'a(2-13)) (Cyanobacteria bacterium Yellowstone B-Prime) protein is Light-independent protochlorophyllide reductase iron-sulfur ATP-binding protein.